We begin with the raw amino-acid sequence, 268 residues long: Thiazole synthase (268 aa).

Catalysis depends on lysine 108, which acts as the Schiff-base intermediate with DXP. 1-deoxy-D-xylulose 5-phosphate contacts are provided by residues glycine 169, 195–196 (AG), and 217–218 (NS). The segment at 248-268 (RLKENPLASPSSPLDGVISNN) is disordered. The span at 255–268 (ASPSSPLDGVISNN) shows a compositional bias: polar residues.

Belongs to the ThiG family. In terms of assembly, homotetramer. Forms heterodimers with either ThiH or ThiS.

It localises to the cytoplasm. The enzyme catalyses [ThiS sulfur-carrier protein]-C-terminal-Gly-aminoethanethioate + 2-iminoacetate + 1-deoxy-D-xylulose 5-phosphate = [ThiS sulfur-carrier protein]-C-terminal Gly-Gly + 2-[(2R,5Z)-2-carboxy-4-methylthiazol-5(2H)-ylidene]ethyl phosphate + 2 H2O + H(+). It participates in cofactor biosynthesis; thiamine diphosphate biosynthesis. Its function is as follows. Catalyzes the rearrangement of 1-deoxy-D-xylulose 5-phosphate (DXP) to produce the thiazole phosphate moiety of thiamine. Sulfur is provided by the thiocarboxylate moiety of the carrier protein ThiS. In vitro, sulfur can be provided by H(2)S. In Prochlorococcus marinus (strain NATL2A), this protein is Thiazole synthase.